The sequence spans 369 residues: Anhydro-N-acetylmuramic acid kinase (369 aa).

ATP is bound at residue 12-19 (GTSLDGVD).

This sequence belongs to the anhydro-N-acetylmuramic acid kinase family.

It carries out the reaction 1,6-anhydro-N-acetyl-beta-muramate + ATP + H2O = N-acetyl-D-muramate 6-phosphate + ADP + H(+). Its pathway is amino-sugar metabolism; 1,6-anhydro-N-acetylmuramate degradation. The protein operates within cell wall biogenesis; peptidoglycan recycling. Functionally, catalyzes the specific phosphorylation of 1,6-anhydro-N-acetylmuramic acid (anhMurNAc) with the simultaneous cleavage of the 1,6-anhydro ring, generating MurNAc-6-P. Is required for the utilization of anhMurNAc either imported from the medium or derived from its own cell wall murein, and thus plays a role in cell wall recycling. The sequence is that of Anhydro-N-acetylmuramic acid kinase from Escherichia coli O7:K1 (strain IAI39 / ExPEC).